A 354-amino-acid chain; its full sequence is Putative Xaa-Pro aminopeptidase (354 aa).

Asp213, Asp224, His290, Glu319, and Glu333 together coordinate Mn(2+).

This sequence belongs to the peptidase M24B family. It depends on Mn(2+) as a cofactor.

It carries out the reaction Release of any N-terminal amino acid, including proline, that is linked to proline, even from a dipeptide or tripeptide.. This chain is Putative Xaa-Pro aminopeptidase (pepP), found in Mycoplasma pneumoniae (strain ATCC 29342 / M129 / Subtype 1) (Mycoplasmoides pneumoniae).